The following is a 155-amino-acid chain: Cytochrome c-type biogenesis protein CcmE (155 aa).

The Cytoplasmic segment spans residues 1 to 8 (MNPVRKRR). Residues 9 to 29 (LFIVLAILAGVGAAVALALSA) traverse the membrane as a helical; Signal-anchor for type II membrane protein segment. Over 30 to 155 (LQQNINLFYT…YENGKPGGAQ (126 aa)) the chain is Periplasmic. His-124 and Tyr-128 together coordinate heme.

It belongs to the CcmE/CycJ family.

It is found in the cell inner membrane. Functionally, heme chaperone required for the biogenesis of c-type cytochromes. Transiently binds heme delivered by CcmC and transfers the heme to apo-cytochromes in a process facilitated by CcmF and CcmH. This is Cytochrome c-type biogenesis protein CcmE from Azotobacter vinelandii (strain DJ / ATCC BAA-1303).